The sequence spans 535 residues: Expansin-like protein 9 (535 aa).

The signal sequence occupies residues 1–25 (MKINKNNYFKIIIFIIYVIINLINA). N-linked (GlcNAc...) asparagine glycosylation is present at Asn24. Residues 26–514 (SDNVKLSNCG…DNSSNILLFS (489 aa)) lie on the Extracellular side of the membrane. Positions 31–144 (LSNCGQARAE…QEVSCGFLGN (114 aa)) constitute an Expansin-like EG45 domain. 2 cysteine pairs are disulfide-bonded: Cys34–Cys75 and Cys78–Cys139. Residues Asn122, Asn257, and Asn292 are each glycosylated (N-linked (GlcNAc...) asparagine). Residues 459–487 (VDGSSNDDDGTGGTGGGASNKVGKRVDGE) form a disordered region. Residue Asn506 is glycosylated (N-linked (GlcNAc...) asparagine). Residues 515–535 (FNITLTFLLLSLIINILLLLF) traverse the membrane as a helical segment.

It belongs to the expansin family. Expansin A subfamily.

The protein resides in the membrane. Functionally, may serve to lubricate the movement of the cellulose microfibrils during cell growth and wall extension and/or may serve to maintain the fluid state of the slug cell wall. This Dictyostelium discoideum (Social amoeba) protein is Expansin-like protein 9 (expl9).